Here is a 179-residue protein sequence, read N- to C-terminus: Prion-like protein doppel (179 aa).

The N-terminal stretch at 1–25 (MKNRLGTWWVAILCMLLASHLSTVK) is a signal peptide. The interval 27–50 (RGIKHRFKWNRKVLPSSGGQITEA) is flexible tail. The tract at residues 51-155 (RVAENRPGAF…KHCDFWLERG (105 aa)) is globular. Disulfide bonds link Cys95/Cys148 and Cys109/Cys143. N-linked (GlcNAc...) asparagine glycosylation is found at Asn99 and Asn111. Residues 125 to 142 (KQDSKLHQRVLWRLIKEI) are cu(2+) binding. The GPI-anchor amidated glycine moiety is linked to residue Gly155. Positions 156-179 (AALRVAVDQPAMVCLLGFVWFIVK) are cleaved as a propeptide — removed in mature form.

This sequence belongs to the prion family. Post-translationally, N-glycosylated. N-glycosylated at two distinct sites. O-glycosylated. In terms of tissue distribution, detected in testis. Detected within seminiferous tubules, on round and elongated spermatids (at protein level). Not detected in brain (at protein level). Detected in testis, and at low levels in heart. Expression in brain is very low and barely detectable.

It is found in the cell membrane. Functionally, required for normal acrosome reaction and for normal male fertility. Can bind Cu(2+). In Mus musculus (Mouse), this protein is Prion-like protein doppel (Prnd).